A 306-amino-acid polypeptide reads, in one-letter code: Probable zinc metalloprotease VDBG_06923 (306 aa).

Residues 1–28 form the signal peptide; that stretch reads MNYEAEQPGANDDASGVAVALELARVLA. Zn(2+) is bound by residues Asp-12 and Glu-45. Residue Asn-60 is glycosylated (N-linked (GlcNAc...) asparagine). Zn(2+) is bound at residue Asp-72. One can recognise a Fibronectin type-III domain in the interval 218–306; sequence APAKVNNVRV…KSPVTIPFPT (89 aa). N-linked (GlcNAc...) asparagine glycosylation is found at Asn-228, Asn-234, and Asn-244.

Belongs to the peptidase M28 family. M28B subfamily. It depends on Zn(2+) as a cofactor.

The protein resides in the secreted. In Verticillium alfalfae (strain VaMs.102 / ATCC MYA-4576 / FGSC 10136) (Verticillium wilt of alfalfa), this protein is Probable zinc metalloprotease VDBG_06923.